The following is a 275-amino-acid chain: Envelope glycoprotein (275 aa).

3 disulfide bridges follow: Cys-1–Cys-10, Cys-18–Cys-27, and Cys-58–Cys-62. N-linked (GlcNAc...) asparagine; by host glycosylation occurs at Asn-122. Disulfide bonds link Cys-164–Cys-194, Cys-187–Cys-239, Cys-204–Cys-209, and Cys-240–Cys-245.

It belongs to the hantavirus envelope glycoprotein family. Homodimer. Homotetramer; forms heterotetrameric Gn-Gc spikes in the pre-fusion conformation. Homotrimer; forms homotrimer in the post-fusion conformation at acidic pH. Interacts (via C-terminus) with the nucleoprotein. Post-translationally, envelope polyprotein precursor is quickly cleaved in vivo just after synthesis, presumably by host signal peptidase.

It localises to the virion membrane. The protein resides in the host cell surface. The protein localises to the host Golgi apparatus membrane. It is found in the host endoplasmic reticulum membrane. Functionally, forms homotetramers with glycoprotein N at the surface of the virion. Attaches the virion to host cell receptors including integrin ITGAV/ITGB3. This attachment induces virion internalization predominantly through clathrin-dependent endocytosis. Class II fusion protein that promotes fusion of viral membrane with host endosomal membrane after endocytosis of the virion. In Homo sapiens (Human), this protein is Envelope glycoprotein (GP).